We begin with the raw amino-acid sequence, 186 residues long: MNVSKYVAIFSFVFIQLISVGKVFANADEWMTTFRENIAQTRQQPEHYDLYIPAITWHARFAYDKEKTDRYNERPWGGGFGLSRWDEKGNWHGLYAMAFKDSWNKWEPIAGYGWESTWRPLADENFHLGLGFTAGVTARDNWNYIPLPVLLPLASVGYGPVTFQMTYIPGTYNNGNVYFAWMRFQF.

Residues 1–25 (MNVSKYVAIFSFVFIQLISVGKVFA) form the signal peptide. Active-site residues include H58, D101, and S102.

Belongs to the lipid A palmitoyltransferase family. In terms of assembly, homodimer.

The protein resides in the cell outer membrane. The catalysed reaction is lipid A (E. coli) + a 1-hexadecanoyl-2-acyl-sn-glycero-3-phosphocholine = hepta-acyl lipid A (E. coli) + a 2-acyl-sn-glycero-3-phosphocholine. It catalyses the reaction lipid IIA + a 1-hexadecanoyl-2-acyl-sn-glycero-3-phosphocholine = lipid IIB + a 2-acyl-sn-glycero-3-phosphocholine. It carries out the reaction lipid IVA (E. coli) + a 1-hexadecanoyl-2-acyl-sn-glycero-3-phosphocholine = lipid IVB (E. coli) + a 2-acyl-sn-glycero-3-phosphocholine. Its function is as follows. Transfers a palmitate residue from the sn-1 position of a phospholipid to the N-linked hydroxymyristate on the proximal unit of lipid A or its precursors. The chain is Lipid A palmitoyltransferase PagP from Escherichia coli (strain ATCC 55124 / KO11FL).